A 360-amino-acid chain; its full sequence is Peptide chain release factor 1 (360 aa).

Glutamine 235 is subject to N5-methylglutamine. Positions 283–293 (EREAQAKEASA) are enriched in basic and acidic residues. Residues 283–305 (EREAQAKEASARKSLIGSGDRSD) are disordered.

It belongs to the prokaryotic/mitochondrial release factor family. Post-translationally, methylated by PrmC. Methylation increases the termination efficiency of RF1.

The protein resides in the cytoplasm. In terms of biological role, peptide chain release factor 1 directs the termination of translation in response to the peptide chain termination codons UAG and UAA. This chain is Peptide chain release factor 1, found in Ralstonia pickettii (strain 12J).